Here is a 148-residue protein sequence, read N- to C-terminus: Deoxyuridine 5'-triphosphate nucleotidohydrolase (148 aa).

Substrate is bound by residues 68–70, N81, 85–87, and K95; these read RSG and TID.

This sequence belongs to the dUTPase family. The cofactor is Mg(2+).

The enzyme catalyses dUTP + H2O = dUMP + diphosphate + H(+). It functions in the pathway pyrimidine metabolism; dUMP biosynthesis; dUMP from dCTP (dUTP route): step 2/2. In terms of biological role, this enzyme is involved in nucleotide metabolism: it produces dUMP, the immediate precursor of thymidine nucleotides and it decreases the intracellular concentration of dUTP so that uracil cannot be incorporated into DNA. The sequence is that of Deoxyuridine 5'-triphosphate nucleotidohydrolase from Rickettsia conorii (strain ATCC VR-613 / Malish 7).